The primary structure comprises 605 residues: DNA mismatch repair protein MutL (605 aa).

This sequence belongs to the DNA mismatch repair MutL/HexB family.

Functionally, this protein is involved in the repair of mismatches in DNA. It is required for dam-dependent methyl-directed DNA mismatch repair. May act as a 'molecular matchmaker', a protein that promotes the formation of a stable complex between two or more DNA-binding proteins in an ATP-dependent manner without itself being part of a final effector complex. The polypeptide is DNA mismatch repair protein MutL (Exiguobacterium sp. (strain ATCC BAA-1283 / AT1b)).